An 873-amino-acid polypeptide reads, in one-letter code: MKSSEIRQKFLQFFQSKGHTIVPSASLVPGNDPTLLFTNSGMVQFKDVFTGKETRSYTRATSSQRSVRAGGKHNDLENVGYTARHHTFFEMLGNFSFGDYFKRDAIQYAWELLTQVYKLPAEKLWVTVYQEDDQAYDIWATEVGVPRERIIRIGDNKGSRYASDNFWQMADTGPCGPCSEIFYDHGPDVWGGPPGSPEEDGDRYIEIWNLVFMQFERDAAGNMTPLPKPCVDTGMGLERIAAVLQGVHSNYEIDLFQNLIRAAARETGVTNLEDNSLKVIADHIRACAFLIVDGVIPSNEGRGYVLRRIVRRALRHGYKLGQTKPFFYKLVPDLVAEMGQAYPELTQAAERVAQVLKQEEERFGETLEHGMKILDGALAGVPAGGQLDGTTLFTLYDTYGFPVDLTADICRERNVEVDMAGFDAAMARQRDQARAAGKFKMAEGLSYEGADTRFEGYEKLELDGVKVAALYVDGTQVERVQAGQHAVVVLDATPFYAESGGQVGDTGLLESGGARFAVADTLKIQAGVFGHHGVLESGSLAVGDTLLARVDAVRRARTVRNHSATHLMHKALRQVLGAHVQQRGSLVDPDKTRFDFAHDAPLSAEQIAQVEAIVNAEVLANQPTQARVMAYDDAVKGGAMALFGEKYGDTVRVLDIGFSRELCGGTHVSRTGDIGLFKIVAEGGVAAGVRRVEAITGDNALAWVQNQNALLLRAAGMLRTTPADLPERLAQVQEQLRTLEKDLEQARGKLAASAGNDLAAKAAEVKGVKVLAASLGDIDPKALRGMVDNLKDRLKSAVVLLASAGGDGKISLVGGVTADLTGRVKAGDLVGFVAGQVGGKGGGRPDMAMGGGNDAQALPAAVASVQGWVDERL.

4 residues coordinate Zn(2+): His-562, His-566, Cys-663, and His-667.

It belongs to the class-II aminoacyl-tRNA synthetase family. Zn(2+) is required as a cofactor.

It localises to the cytoplasm. It carries out the reaction tRNA(Ala) + L-alanine + ATP = L-alanyl-tRNA(Ala) + AMP + diphosphate. In terms of biological role, catalyzes the attachment of alanine to tRNA(Ala) in a two-step reaction: alanine is first activated by ATP to form Ala-AMP and then transferred to the acceptor end of tRNA(Ala). Also edits incorrectly charged Ser-tRNA(Ala) and Gly-tRNA(Ala) via its editing domain. This chain is Alanine--tRNA ligase, found in Bordetella petrii (strain ATCC BAA-461 / DSM 12804 / CCUG 43448).